A 598-amino-acid polypeptide reads, in one-letter code: MQTFNADIAIIGAGGAGLRAAIAAAEANPQLKIALISKVYPMRSHTVAAEGGSAAVTQAHDSYDFHFNDTVSGGDWLCEQDVVDYFVEHCPTEMTQLELWGCPWSRKEDGSVNVRRFGGMKIERTWFAADKTGFHMLHTLFQTSLKYPQIQRFDEHFVLDILVDEGHARGVVAINMMEGTKVQIRANAVIMATGGAGRVYRFNTNGGIVTGDGMGIALRHGVPLRDMEFVQYHPTGLPGSGILMTEGCRGEGGILVNKDGYRYLQDYGLGPETPLGKPENKYMELGPRDKVSQAFWHEWRAGRTIKTHRGDVVHLDLRHLGAKKLHERLPFICELAKAYVGVDPVNEPIPVRPTAHYTMGGIETNQRTETRIKGLFAVGECSSVGLHGANRLGSNSLAELVVFGRLAGEEAVRRAQEATPANASALDAQTRDIEDNLKKLMNQKGSENWAQIRDEMGEAMEEGCGIYRTPELMQKTIDKLTELKERFKHVEIKDTSSVFNTDLLYKIELGFGLDVAECMAHSAFNRKESRGAHQRLDEGCTERDDVNFLKHTLAFYNPEGAPRLEYSDVKITKSAPAKRVYGGEATAQDKQNKEKANG.

FAD is bound by residues 12-16 (GAGGA), 36-38 (ISK), 44-52 (SHTVAAEGG), 156-158 (HFV), and D212. Tele-8alpha-FAD histidine is present on H45. Active-site residues include H233 and R249. Residues 356–357 (HY), E380, and 391–397 (RLGSNSL) contribute to the FAD site. Positions 577-598 (AKRVYGGEATAQDKQNKEKANG) are disordered.

It belongs to the FAD-dependent oxidoreductase 2 family. FRD/SDH subfamily. As to quaternary structure, part of an enzyme complex containing four subunits: a flavoprotein (FrdA), an iron-sulfur protein (FrdB), and two hydrophobic anchor proteins (FrdC and FrdD). FAD serves as cofactor.

It is found in the cell inner membrane. It catalyses the reaction a quinone + succinate = fumarate + a quinol. The enzyme catalyses a menaquinone + succinate = a menaquinol + fumarate. Its function is as follows. Two distinct, membrane-bound, FAD-containing enzymes are responsible for the catalysis of fumarate and succinate interconversion; the fumarate reductase is used in anaerobic growth, and the succinate dehydrogenase is used in aerobic growth. In Proteus vulgaris, this protein is Fumarate reductase flavoprotein subunit (frdA).